The primary structure comprises 350 residues: Phenylalanine--tRNA ligase alpha subunit (350 aa).

Position 271 (Glu-271) interacts with Mg(2+).

Belongs to the class-II aminoacyl-tRNA synthetase family. Phe-tRNA synthetase alpha subunit type 1 subfamily. In terms of assembly, tetramer of two alpha and two beta subunits. Mg(2+) is required as a cofactor.

It is found in the cytoplasm. The catalysed reaction is tRNA(Phe) + L-phenylalanine + ATP = L-phenylalanyl-tRNA(Phe) + AMP + diphosphate + H(+). This chain is Phenylalanine--tRNA ligase alpha subunit, found in Paracidovorax citrulli (strain AAC00-1) (Acidovorax citrulli).